The sequence spans 880 residues: Alanine--tRNA ligase (880 aa).

The Zn(2+) site is built by H567, H571, C669, and H673.

Belongs to the class-II aminoacyl-tRNA synthetase family. It depends on Zn(2+) as a cofactor.

It is found in the cytoplasm. The catalysed reaction is tRNA(Ala) + L-alanine + ATP = L-alanyl-tRNA(Ala) + AMP + diphosphate. Functionally, catalyzes the attachment of alanine to tRNA(Ala) in a two-step reaction: alanine is first activated by ATP to form Ala-AMP and then transferred to the acceptor end of tRNA(Ala). Also edits incorrectly charged Ser-tRNA(Ala) and Gly-tRNA(Ala) via its editing domain. This is Alanine--tRNA ligase from Bacillus cereus (strain ZK / E33L).